We begin with the raw amino-acid sequence, 417 residues long: Putative F-box protein At4g21240 (417 aa).

Residues 1–12 (MDRREEEEEETG) are compositionally biased toward acidic residues. The segment at 1–25 (MDRREEEEEETGYGEKGTRNQSKED) is disordered. The segment covering 16–25 (KGTRNQSKED) has biased composition (basic and acidic residues). The F-box domain maps to 30 to 76 (GKIFELIPLDMIPDILLRLPAKSAVRFRIVSKLWLSITTRPYFIRSF).

In Arabidopsis thaliana (Mouse-ear cress), this protein is Putative F-box protein At4g21240.